Here is a 117-residue protein sequence, read N- to C-terminus: Large ribosomal subunit protein bL20c (117 aa).

It belongs to the bacterial ribosomal protein bL20 family.

The protein resides in the plastid. It is found in the chloroplast. In terms of biological role, binds directly to 23S ribosomal RNA and is necessary for the in vitro assembly process of the 50S ribosomal subunit. It is not involved in the protein synthesizing functions of that subunit. In Chloranthus spicatus (Chulantree), this protein is Large ribosomal subunit protein bL20c.